The primary structure comprises 327 residues: Serum response factor homolog (327 aa).

Residues 12-43 (QKLQNASPALPEGTSSTPTPSSSTGLLPNGKK) form a disordered region. The span at 25–35 (TSSTPTPSSST) shows a compositional bias: low complexity. The MADS-box domain occupies 45–105 (KGRVKIKMEY…GHVYTYATPK (61 aa)). The tract at residues 189–225 (TFGEDDYNNDESGDDSDSEEASSDIKEEYQGSPTMVK) is disordered. The segment covering 191–210 (GEDDYNNDESGDDSDSEEAS) has biased composition (acidic residues).

Expressed in muscle, varying with age, decreasing twofold during the first week of adulthood.

Its subcellular location is the nucleus. Functionally, transcription factor. Regulates myogenesis, in cooperation with transcription factors hlh-1 and hnd-1. Required for maintenance of muscle in adulthood. This is Serum response factor homolog from Caenorhabditis elegans.